A 149-amino-acid polypeptide reads, in one-letter code: Large ribosomal subunit protein bL9 (149 aa).

Belongs to the bacterial ribosomal protein bL9 family.

Its function is as follows. Binds to the 23S rRNA. The polypeptide is Large ribosomal subunit protein bL9 (Bacillus licheniformis (strain ATCC 14580 / DSM 13 / JCM 2505 / CCUG 7422 / NBRC 12200 / NCIMB 9375 / NCTC 10341 / NRRL NRS-1264 / Gibson 46)).